Here is a 94-residue protein sequence, read N- to C-terminus: HssA/B-like protein 49 (94 aa).

The interval 1 to 20 (MTLFSSISSISNPMTSSKSS) is disordered.

The protein belongs to the hssA/B family.

In Dictyostelium discoideum (Social amoeba), this protein is HssA/B-like protein 49 (hssl49).